Consider the following 419-residue polypeptide: Zinc metalloproteinase-disintegrin-like atrolysin-A (419 aa).

Residues 6-202 (RYVELVIVAD…YNPQCILNEP (197 aa)) enclose the Peptidase M12B domain. Glu-9 lines the Ca(2+) pocket. A glycan (N-linked (GlcNAc...) asparagine) is linked at Asn-72. Asp-93 lines the Ca(2+) pocket. 3 cysteine pairs are disulfide-bonded: Cys-117–Cys-197, Cys-157–Cys-181, and Cys-159–Cys-164. His-142 is a binding site for Zn(2+). Residue Glu-143 is part of the active site. His-146 and His-152 together coordinate Zn(2+). 8 residues coordinate Ca(2+): Cys-197, Asn-200, Val-212, Asn-215, Leu-217, Glu-219, Glu-222, and Asp-225. In terms of domain architecture, Disintegrin spans 210-296 (PPVCGNELLE…DCPTDDFHRN (87 aa)). 14 disulfides stabilise this stretch: Cys-213/Cys-242, Cys-224/Cys-237, Cys-226/Cys-232, Cys-236/Cys-259, Cys-250/Cys-256, Cys-255/Cys-281, Cys-268/Cys-288, Cys-275/Cys-307, Cys-300/Cys-312, Cys-319/Cys-369, Cys-334/Cys-376, Cys-347/Cys-357, Cys-364/Cys-398, and Cys-392/Cys-403. The D/ECD-tripeptide signature appears at 274–276 (ECD). N-linked (GlcNAc...) asparagine glycans are attached at residues Asn-326, Asn-338, and Asn-342.

This sequence belongs to the venom metalloproteinase (M12B) family. P-III subfamily. P-IIIa sub-subfamily. In terms of assembly, monomer. It depends on Zn(2+) as a cofactor. As to expression, expressed by the venom gland.

It localises to the secreted. It carries out the reaction Cleavage of 3-Asn-|-Gln-4, 5-His-|-Leu-6, 10-His-|-Leu-11, 14-Ala-|-Leu-15 and 16-Tyr-|-Leu-17 in insulin B chain. Removes C-terminal Leu from small peptides.. Its function is as follows. Snake venom zinc metalloproteinase-disintegrin that causes hemorrhage by provoking the degradation of the sub-endothelial matrix proteins (fibronectin, laminin, type IV collagen, nidogen, and gelatins) and disturbances in platelet function. The recombinant cysteine-rich domain interacts with the alpha-2/beta-1 integrin (ITGA2/ITGB1) (collagen receptor), and inhibits the platelet aggregation induced by collagen. This is Zinc metalloproteinase-disintegrin-like atrolysin-A from Crotalus atrox (Western diamondback rattlesnake).